The primary structure comprises 231 residues: Small ribosomal subunit protein uS3 (231 aa).

Residues 39 to 107 form the KH type-2 domain; it reads IRELLHKELK…DVVINIVEIR (69 aa).

This sequence belongs to the universal ribosomal protein uS3 family. In terms of assembly, part of the 30S ribosomal subunit. Forms a tight complex with proteins S10 and S14.

Binds the lower part of the 30S subunit head. Binds mRNA in the 70S ribosome, positioning it for translation. This is Small ribosomal subunit protein uS3 from Nitrobacter hamburgensis (strain DSM 10229 / NCIMB 13809 / X14).